The sequence spans 338 residues: Ketol-acid reductoisomerase (NADP(+)) (338 aa).

A KARI N-terminal Rossmann domain is found at 1-181 (MNIYYDKDCD…GGGRAGIIET (181 aa)). NADP(+)-binding positions include 24-27 (YGSQ), arginine 47, serine 50, serine 52, and 82-85 (DEHQ). Histidine 107 is an active-site residue. Residue glycine 133 coordinates NADP(+). A KARI C-terminal knotted domain is found at 182–327 (AFREETETDL…ERLRSMMPWI (146 aa)). Mg(2+)-binding residues include aspartate 190, glutamate 194, glutamate 226, and glutamate 230. Serine 251 is a binding site for substrate.

It belongs to the ketol-acid reductoisomerase family. It depends on Mg(2+) as a cofactor.

The enzyme catalyses (2R)-2,3-dihydroxy-3-methylbutanoate + NADP(+) = (2S)-2-acetolactate + NADPH + H(+). It carries out the reaction (2R,3R)-2,3-dihydroxy-3-methylpentanoate + NADP(+) = (S)-2-ethyl-2-hydroxy-3-oxobutanoate + NADPH + H(+). Its pathway is amino-acid biosynthesis; L-isoleucine biosynthesis; L-isoleucine from 2-oxobutanoate: step 2/4. The protein operates within amino-acid biosynthesis; L-valine biosynthesis; L-valine from pyruvate: step 2/4. In terms of biological role, involved in the biosynthesis of branched-chain amino acids (BCAA). Catalyzes an alkyl-migration followed by a ketol-acid reduction of (S)-2-acetolactate (S2AL) to yield (R)-2,3-dihydroxy-isovalerate. In the isomerase reaction, S2AL is rearranged via a Mg-dependent methyl migration to produce 3-hydroxy-3-methyl-2-ketobutyrate (HMKB). In the reductase reaction, this 2-ketoacid undergoes a metal-dependent reduction by NADPH to yield (R)-2,3-dihydroxy-isovalerate. The chain is Ketol-acid reductoisomerase (NADP(+)) from Nitrosococcus oceani (strain ATCC 19707 / BCRC 17464 / JCM 30415 / NCIMB 11848 / C-107).